Consider the following 182-residue polypeptide: Nucleoside-triphosphatase THEP1 (182 aa).

ATP-binding positions include G10–T17 and V102–G109.

The protein belongs to the THEP1 NTPase family.

It catalyses the reaction a ribonucleoside 5'-triphosphate + H2O = a ribonucleoside 5'-diphosphate + phosphate + H(+). In terms of biological role, has nucleotide phosphatase activity towards ATP, GTP, CTP, TTP and UTP. May hydrolyze nucleoside diphosphates with lower efficiency. The sequence is that of Nucleoside-triphosphatase THEP1 from Thermofilum pendens (strain DSM 2475 / Hrk 5).